The chain runs to 378 residues: Spermidine/putrescine import ATP-binding protein PotA (378 aa).

The 231-residue stretch at 18–248 (VLLSGISKSF…PKNLFVAGFI (231 aa)) folds into the ABC transporter domain. ATP is bound at residue 50 to 57 (GPSGCGKT).

The protein belongs to the ABC transporter superfamily. Spermidine/putrescine importer (TC 3.A.1.11.1) family. The complex is composed of two ATP-binding proteins (PotA), two transmembrane proteins (PotB and PotC) and a solute-binding protein (PotD).

The protein localises to the cell inner membrane. The enzyme catalyses ATP + H2O + polyamine-[polyamine-binding protein]Side 1 = ADP + phosphate + polyamineSide 2 + [polyamine-binding protein]Side 1.. In terms of biological role, part of the ABC transporter complex PotABCD involved in spermidine/putrescine import. Responsible for energy coupling to the transport system. This Salmonella typhi protein is Spermidine/putrescine import ATP-binding protein PotA.